The following is a 274-amino-acid chain: Kit ligand (274 aa).

The first 25 residues, 1–25, serve as a signal peptide directing secretion; the sequence is MKKTQTWIVTCIYLQLLLFNPLVKT. Over 26–215 the chain is Extracellular; it reads KGLCRNRVTD…TNPIEDSSIQ (190 aa). 2 disulfide bridges follow: cysteine 29–cysteine 114 and cysteine 68–cysteine 164. 4 N-linked (GlcNAc...) asparagine glycosylation sites follow: asparagine 90, asparagine 97, asparagine 145, and asparagine 196. Residues 216 to 238 form a helical membrane-spanning segment; that stretch reads WAVMALPACFSLVIGFAFGAFYW. Topologically, residues 239-274 are cytoplasmic; sequence KKKQPNLTRTVENIQINEEDNEISMLQEKEREFQEV.

It belongs to the SCF family. In terms of assembly, homodimer, non-covalently linked. Post-translationally, a soluble form is produced by proteolytic processing of isoform 1 in the extracellular domain.

The protein resides in the cell membrane. It localises to the secreted. The protein localises to the cytoplasm. It is found in the cytoskeleton. Its subcellular location is the cell projection. The protein resides in the lamellipodium. It localises to the filopodium. Its function is as follows. Stimulates the proliferation of mast cells. Able to augment the proliferation of both myeloid and lymphoid hematopoietic progenitors in bone marrow culture. Also mediates cell-cell adhesion. Acts synergistically with other cytokines, probably interleukins. The polypeptide is Kit ligand (KITLG) (Felis catus (Cat)).